Consider the following 324-residue polypeptide: CIMIP2 protein GA14893 (324 aa).

Belongs to the CIMIP2 family.

The protein localises to the cytoplasm. It localises to the cytoskeleton. The protein resides in the cilium axoneme. Its function is as follows. Probable microtubule inner protein (MIP) part of the dynein-decorated doublet microtubules (DMTs) in cilium axoneme. The polypeptide is CIMIP2 protein GA14893 (Drosophila pseudoobscura pseudoobscura (Fruit fly)).